Here is an 86-residue protein sequence, read N- to C-terminus: Small ribosomal subunit protein uS17 (86 aa).

Belongs to the universal ribosomal protein uS17 family. As to quaternary structure, part of the 30S ribosomal subunit.

In terms of biological role, one of the primary rRNA binding proteins, it binds specifically to the 5'-end of 16S ribosomal RNA. This Nitrosococcus oceani (strain ATCC 19707 / BCRC 17464 / JCM 30415 / NCIMB 11848 / C-107) protein is Small ribosomal subunit protein uS17.